A 175-amino-acid chain; its full sequence is Translation initiation factor IF-3 (175 aa).

This sequence belongs to the IF-3 family. In terms of assembly, monomer.

The protein localises to the cytoplasm. Functionally, IF-3 binds to the 30S ribosomal subunit and shifts the equilibrium between 70S ribosomes and their 50S and 30S subunits in favor of the free subunits, thus enhancing the availability of 30S subunits on which protein synthesis initiation begins. The protein is Translation initiation factor IF-3 of Staphylococcus aureus (strain NCTC 8325 / PS 47).